We begin with the raw amino-acid sequence, 141 residues long: Large ribosomal subunit protein uL11 (141 aa).

It belongs to the universal ribosomal protein uL11 family. In terms of assembly, part of the ribosomal stalk of the 50S ribosomal subunit. Interacts with L10 and the large rRNA to form the base of the stalk. L10 forms an elongated spine to which L12 dimers bind in a sequential fashion forming a multimeric L10(L12)X complex. In terms of processing, one or more lysine residues are methylated.

Its function is as follows. Forms part of the ribosomal stalk which helps the ribosome interact with GTP-bound translation factors. This Lactobacillus johnsonii (strain CNCM I-12250 / La1 / NCC 533) protein is Large ribosomal subunit protein uL11.